The sequence spans 186 residues: Large ribosomal subunit protein uL5c (186 aa).

The protein belongs to the universal ribosomal protein uL5 family. As to quaternary structure, part of the 50S ribosomal subunit; contacts the 5S rRNA.

The protein resides in the plastid. It is found in the chloroplast. Its function is as follows. Binds 5S rRNA, forms part of the central protuberance of the 50S subunit. The protein is Large ribosomal subunit protein uL5c (rpl5) of Pleurastrum terricola (Filamentous green alga).